Reading from the N-terminus, the 190-residue chain is Large ribosomal subunit protein uL10 (190 aa).

The segment at 170–190 is disordered; the sequence is AAGAPAEAAPVEAPAAETVDA.

Belongs to the universal ribosomal protein uL10 family. As to quaternary structure, part of the ribosomal stalk of the 50S ribosomal subunit. The N-terminus interacts with L11 and the large rRNA to form the base of the stalk. The C-terminus forms an elongated spine to which L12 dimers bind in a sequential fashion forming a multimeric L10(L12)X complex.

In terms of biological role, forms part of the ribosomal stalk, playing a central role in the interaction of the ribosome with GTP-bound translation factors. This Kineococcus radiotolerans (strain ATCC BAA-149 / DSM 14245 / SRS30216) protein is Large ribosomal subunit protein uL10.